The chain runs to 918 residues: Pre-pro-metalloprotease PrtV (918 aa).

The first 23 residues, 1–23, serve as a signal peptide directing secretion; that stretch reads MKTIKKTLLAAAIASFFSSGLYA. Positions 24 to 105 are excised as a propeptide; the sequence is QTPIDLGVVN…QKGPHKARVF (82 aa). Position 330 (His330) interacts with Zn(2+). Glu331 is an active-site residue. His334 lines the Zn(2+) pocket. 4 residues coordinate Ca(2+): Ile757, Asp782, Asp821, and Asp825. 2 consecutive PKD domains span residues 758 to 835 and 855 to 918; these read APVA…TIKV and VTMW…KVKL. The propeptide occupies 835–918; the sequence is VDTPNALPQA…VTTITIKVKL (84 aa).

The protein belongs to the peptidase M6 family. Zn(2+) serves as cofactor. Post-translationally, prtV is expressed as an inactive, multidomain, 102 kDa pre-pro-metalloprotease. To form a catalytically active protease, PrtV is first secreted, and then it undergoes N- and C-terminal cleavages during envelope translocation to yield a 81 kDa pro-metalloprotease. Outside the cell, the 81 kDa pro-metalloprotease undergoes an auto-cleavage. The two major products of autoproteolysis (37 kDa and 18 kDa) together form the so called 55 kDa active complex.

It is found in the secreted. With respect to regulation, calcium plays an important structural role, providing stability to this protein in the cytoplasm. Outside the cell, the decrease of the calcium concentration triggers the autoproteolysis. PrtV activity is increased by 25 mM of Sr(2+) or Mg(2+) and to some extent by Ba(2+); however, Ba(2+) inhibits PrtV at higher concentrations. Completely inhibited by EDTA and 1,10-phenanthroline. Its function is as follows. Metalloprotease that exhibits a cytotoxic effect leading to cell death. In host tissues, it could play a role in pathogenesis by modulating the stability of the extracellular matrix components such as fibronectin and fibrinogen. Also able to cleave plasminogen. The polypeptide is Pre-pro-metalloprotease PrtV (Vibrio cholerae serotype O1 (strain ATCC 39315 / El Tor Inaba N16961)).